The following is a 468-amino-acid chain: Zinc finger protein 672 (468 aa).

4 consecutive C2H2-type zinc fingers follow at residues 15 to 37 (YSCS…ERAH), 43 to 65 (FCCL…RWTH), 71 to 93 (YICS…LGTH), and 100 to 123 (RPCR…ARQH). The C2H2-type 5; degenerate zinc finger occupies 129-151 (HRCPLCARSFRQSALPFHLARAH). C2H2-type zinc fingers lie at residues 167–189 (YHCT…SRIH), 202–224 (HLCG…LQRH), 230–252 (FKCP…QRTH), 258–280 (YACS…QRSH), 286–308 (HVCA…QRSH), 314–336 (FPCP…LRTH), 342–364 (YHCE…LRNH), 370–392 (HKCP…RKTH), and 398–420 (AECT…QRSH).

It belongs to the krueppel C2H2-type zinc-finger protein family.

Its subcellular location is the nucleus. May be involved in transcriptional regulation. The protein is Zinc finger protein 672 (Znf672) of Mus musculus (Mouse).